The sequence spans 214 residues: ATP phosphoribosyltransferase (214 aa).

Belongs to the ATP phosphoribosyltransferase family. Short subfamily. Heteromultimer composed of HisG and HisZ subunits.

The protein localises to the cytoplasm. The enzyme catalyses 1-(5-phospho-beta-D-ribosyl)-ATP + diphosphate = 5-phospho-alpha-D-ribose 1-diphosphate + ATP. It participates in amino-acid biosynthesis; L-histidine biosynthesis; L-histidine from 5-phospho-alpha-D-ribose 1-diphosphate: step 1/9. In terms of biological role, catalyzes the condensation of ATP and 5-phosphoribose 1-diphosphate to form N'-(5'-phosphoribosyl)-ATP (PR-ATP). Has a crucial role in the pathway because the rate of histidine biosynthesis seems to be controlled primarily by regulation of HisG enzymatic activity. The protein is ATP phosphoribosyltransferase of Marinomonas sp. (strain MWYL1).